The chain runs to 809 residues: Leucine--tRNA ligase (809 aa).

The short motif at 40–51 (PYPSGQGLHVGH) is the 'HIGH' region element. A 'KMSKS' region motif is present at residues 581–585 (KMSKS). Lys-584 is an ATP binding site.

It belongs to the class-I aminoacyl-tRNA synthetase family.

Its subcellular location is the cytoplasm. The catalysed reaction is tRNA(Leu) + L-leucine + ATP = L-leucyl-tRNA(Leu) + AMP + diphosphate. The sequence is that of Leucine--tRNA ligase from Levilactobacillus brevis (strain ATCC 367 / BCRC 12310 / CIP 105137 / JCM 1170 / LMG 11437 / NCIMB 947 / NCTC 947) (Lactobacillus brevis).